The sequence spans 493 residues: Glycylpeptide N-tetradecanoyltransferase (493 aa).

Residues 1-30 form a disordered region; sequence MSDSKDSKGKAPQKPNDAEQTPGGKLTPQA. Tetradecanoyl-CoA-binding positions include 82–85, 216–218, and 224–228; these read FKFW, LCI, and SKRLA. Leucine 493 (proton acceptor; via carboxylate) is an active-site residue.

Belongs to the NMT family. As to quaternary structure, monomer.

The protein resides in the cytoplasm. The enzyme catalyses N-terminal glycyl-[protein] + tetradecanoyl-CoA = N-tetradecanoylglycyl-[protein] + CoA + H(+). In terms of biological role, adds a myristoyl group to the N-terminal glycine residue of certain cellular proteins. The chain is Glycylpeptide N-tetradecanoyltransferase (swoF) from Emericella nidulans (strain FGSC A4 / ATCC 38163 / CBS 112.46 / NRRL 194 / M139) (Aspergillus nidulans).